The primary structure comprises 376 residues: Anhydro-N-acetylmuramic acid kinase (376 aa).

16 to 23 serves as a coordination point for ATP; the sequence is GTSMDGVD.

It belongs to the anhydro-N-acetylmuramic acid kinase family.

The catalysed reaction is 1,6-anhydro-N-acetyl-beta-muramate + ATP + H2O = N-acetyl-D-muramate 6-phosphate + ADP + H(+). It functions in the pathway amino-sugar metabolism; 1,6-anhydro-N-acetylmuramate degradation. Its pathway is cell wall biogenesis; peptidoglycan recycling. Its function is as follows. Catalyzes the specific phosphorylation of 1,6-anhydro-N-acetylmuramic acid (anhMurNAc) with the simultaneous cleavage of the 1,6-anhydro ring, generating MurNAc-6-P. Is required for the utilization of anhMurNAc either imported from the medium or derived from its own cell wall murein, and thus plays a role in cell wall recycling. This chain is Anhydro-N-acetylmuramic acid kinase, found in Paraburkholderia xenovorans (strain LB400).